The chain runs to 270 residues: Formamidopyrimidine-DNA glycosylase (270 aa).

The active-site Schiff-base intermediate with DNA is Pro-2. Glu-3 acts as the Proton donor in catalysis. Lys-58 functions as the Proton donor; for beta-elimination activity in the catalytic mechanism. DNA is bound by residues His-91, Arg-110, and Arg-151. Residues 236–270 (LVYGRDGLPCPNCGRALKHATIGQRASVWCSHCQR) form an FPG-type zinc finger. The Proton donor; for delta-elimination activity role is filled by Arg-260.

The protein belongs to the FPG family. Monomer. Requires Zn(2+) as cofactor.

It carries out the reaction Hydrolysis of DNA containing ring-opened 7-methylguanine residues, releasing 2,6-diamino-4-hydroxy-5-(N-methyl)formamidopyrimidine.. It catalyses the reaction 2'-deoxyribonucleotide-(2'-deoxyribose 5'-phosphate)-2'-deoxyribonucleotide-DNA = a 3'-end 2'-deoxyribonucleotide-(2,3-dehydro-2,3-deoxyribose 5'-phosphate)-DNA + a 5'-end 5'-phospho-2'-deoxyribonucleoside-DNA + H(+). In terms of biological role, involved in base excision repair of DNA damaged by oxidation or by mutagenic agents. Acts as a DNA glycosylase that recognizes and removes damaged bases. Has a preference for oxidized purines, such as 7,8-dihydro-8-oxoguanine (8-oxoG). Has AP (apurinic/apyrimidinic) lyase activity and introduces nicks in the DNA strand. Cleaves the DNA backbone by beta-delta elimination to generate a single-strand break at the site of the removed base with both 3'- and 5'-phosphates. The sequence is that of Formamidopyrimidine-DNA glycosylase from Stenotrophomonas maltophilia (strain K279a).